Reading from the N-terminus, the 407-residue chain is Pyridinium-3,5-bisthiocarboxylic acid mononucleotide nickel insertion protein (407 aa).

Belongs to the LarC family.

It carries out the reaction Ni(II)-pyridinium-3,5-bisthiocarboxylate mononucleotide = pyridinium-3,5-bisthiocarboxylate mononucleotide + Ni(2+). Functionally, involved in the biosynthesis of a nickel-pincer cofactor ((SCS)Ni(II) pincer complex). Binds Ni(2+), and functions in nickel delivery to pyridinium-3,5-bisthiocarboxylic acid mononucleotide (P2TMN), to form the mature cofactor. Is thus probably required for the activation of nickel-pincer cofactor-dependent enzymes. The chain is Pyridinium-3,5-bisthiocarboxylic acid mononucleotide nickel insertion protein from Acetivibrio thermocellus (strain ATCC 27405 / DSM 1237 / JCM 9322 / NBRC 103400 / NCIMB 10682 / NRRL B-4536 / VPI 7372) (Clostridium thermocellum).